The chain runs to 344 residues: Phosphate acyltransferase (344 aa).

This sequence belongs to the PlsX family. As to quaternary structure, homodimer. Probably interacts with PlsY.

Its subcellular location is the cytoplasm. The catalysed reaction is a fatty acyl-[ACP] + phosphate = an acyl phosphate + holo-[ACP]. It participates in lipid metabolism; phospholipid metabolism. In terms of biological role, catalyzes the reversible formation of acyl-phosphate (acyl-PO(4)) from acyl-[acyl-carrier-protein] (acyl-ACP). This enzyme utilizes acyl-ACP as fatty acyl donor, but not acyl-CoA. This Erwinia tasmaniensis (strain DSM 17950 / CFBP 7177 / CIP 109463 / NCPPB 4357 / Et1/99) protein is Phosphate acyltransferase.